Reading from the N-terminus, the 449-residue chain is Heterogeneous nuclear ribonucleoprotein H (449 aa).

M1 is subject to N-acetylmethionine. The residue at position 2 (M2) is an N-acetylmethionine; in Heterogeneous nuclear ribonucleoprotein H, N-terminally processed. One can recognise an RRM 1 domain in the interval 11 to 90; it reads FVVKVRGLPW…RYVEVFKSNN (80 aa). The residue at position 23 (S23) is a Phosphoserine. K35 is covalently cross-linked (Glycyl lysine isopeptide (Lys-Gly) (interchain with G-Cter in SUMO2)). 2 positions are modified to phosphoserine: S54 and S63. Residues K87 and K98 each participate in a glycyl lysine isopeptide (Lys-Gly) (interchain with G-Cter in SUMO2) cross-link. In terms of domain architecture, RRM 2 spans 111-188; the sequence is GFVRLRGLPF…RYIEIFKSSR (78 aa). R233 is subject to Dimethylated arginine; alternate. An Omega-N-methylarginine; alternate modification is found at R233. The stretch at 234–249 is one 1-1 repeat; the sequence is GAYGGGYGGYDDYNGY. Residues 234–433 form a 2 X 16 AA Gly-rich approximate repeats region; it reads GAYGGGYGGY…YGGQSSMSGY (200 aa). Y246 is modified (phosphotyrosine). Residues 289–364 enclose the RRM 3 domain; it reads HCVHMRGLPY…RYVELFLNST (76 aa). S310 carries the post-translational modification Phosphoserine. A run of 3 repeats spans residues 354-372, 374-392, and 418-433. The tract at residues 354–392 is 2 X 19 AA perfect repeats; the sequence is HRYVELFLNSTAGASGGAYEHRYVELFLNSTAGASGGAY.

As to quaternary structure, part of a ternary complex containing FUBP2, PTBP1, PTBP2 and HNRNPH1. Identified in the spliceosome C complex. Interacts with IGF2BP1. Interacts with CUGBP1; the interaction is RNA-dependent. Interacts with MBNL1; the interaction in RNA-independent.

The protein resides in the nucleus. Its subcellular location is the nucleoplasm. Functionally, this protein is a component of the heterogeneous nuclear ribonucleoprotein (hnRNP) complexes which provide the substrate for the processing events that pre-mRNAs undergo before becoming functional, translatable mRNAs in the cytoplasm. Mediates pre-mRNA alternative splicing regulation. Inhibits, together with CUGBP1, insulin receptor (IR) pre-mRNA exon 11 inclusion in myoblast. Binds to the IR RNA. Binds poly(RG). The chain is Heterogeneous nuclear ribonucleoprotein H (Hnrnph1) from Mus musculus (Mouse).